The sequence spans 65 residues: Large ribosomal subunit protein bL35 (65 aa).

Residues 1–16 are compositionally biased toward basic residues; the sequence is MPKQKTHRASAKRFKR. The interval 1 to 20 is disordered; that stretch reads MPKQKTHRASAKRFKRTGSG.

This sequence belongs to the bacterial ribosomal protein bL35 family.

This chain is Large ribosomal subunit protein bL35, found in Streptococcus equi subsp. equi (strain 4047).